Reading from the N-terminus, the 118-residue chain is UPF0102 protein NE0719 (118 aa).

Belongs to the UPF0102 family.

The polypeptide is UPF0102 protein NE0719 (Nitrosomonas europaea (strain ATCC 19718 / CIP 103999 / KCTC 2705 / NBRC 14298)).